The sequence spans 475 residues: MSPKTETKASVGFKAGVKDYRLTYYTPEYQTKDTDILAAFRVTPQPGVPPEEAGAAVAAESSTGTWTTVWTDGLTSLDRYKGRCYDIEAVPGEESQFIAYVAYPLDLFEEGSVTNLFTSIVGNVFGFKALRALRLEDLRIPPAYSKTFQGPPHGIQVERDKLNKYGRPLLGCTIKPKLGLSAKNYGRAVYECLRGGLDFTKDDENVNSQPFMRWRDRFVFCAEALYKAQAETGEIKGHYLNATAGTCEEMMKRAVFARELGVPIVMHDYLTGGFTANTSLAHYCRDNGLLLHIHRAMHAVIDRQRNHGMHFRVLAKALRMSGGDHIHAGTVVGKLEGERDVTLGFVDLLRDDFIEKDRSRGIYFTQDWVSMPGVLPVASGGIHVWHMPALTEIFGDDSVLQFGGGTLGHPWGNAPGAVANRVALEACVQARNEGRDLAREGNEVIREATKWSPELAAACEVWKEIKFEFDTIDYL.

Positions 1–2 are excised as a propeptide; that stretch reads MS. Position 3 is an N-acetylproline (P3). Position 14 is an N6,N6,N6-trimethyllysine (K14). The substrate site is built by N123 and T173. The active-site Proton acceptor is the K175. Residue K177 participates in substrate binding. Mg(2+) contacts are provided by K201, D203, and E204. K201 is modified (N6-carboxylysine). Catalysis depends on H294, which acts as the Proton acceptor. R295, H327, and S379 together coordinate substrate.

It belongs to the RuBisCO large chain family. Type I subfamily. As to quaternary structure, heterohexadecamer of 8 large chains and 8 small chains; disulfide-linked. The disulfide link is formed within the large subunit homodimers. Requires Mg(2+) as cofactor. The disulfide bond which can form in the large chain dimeric partners within the hexadecamer appears to be associated with oxidative stress and protein turnover.

The protein resides in the plastid. It is found in the chloroplast. The catalysed reaction is 2 (2R)-3-phosphoglycerate + 2 H(+) = D-ribulose 1,5-bisphosphate + CO2 + H2O. It carries out the reaction D-ribulose 1,5-bisphosphate + O2 = 2-phosphoglycolate + (2R)-3-phosphoglycerate + 2 H(+). Functionally, ruBisCO catalyzes two reactions: the carboxylation of D-ribulose 1,5-bisphosphate, the primary event in carbon dioxide fixation, as well as the oxidative fragmentation of the pentose substrate in the photorespiration process. Both reactions occur simultaneously and in competition at the same active site. This is Ribulose bisphosphate carboxylase large chain from Larix occidentalis (Western larch).